A 683-amino-acid polypeptide reads, in one-letter code: THO complex subunit 5 (683 aa).

A disordered region spans residues M1–E42. Residue S2 is modified to N-acetylserine. The tract at residues S2–I144 is interaction with CSF1R. The tract at residues S2–K199 is interaction with THOC7. A phosphoserine mark is found at S5 and S6. A Nuclear localization signal motif is present at residues K7–K10. Over residues E22–E42 the composition is skewed to basic and acidic residues. The stretch at A81 to L247 forms a coiled coil. K153 participates in a covalent cross-link: Glycyl lysine isopeptide (Lys-Gly) (interchain with G-Cter in SUMO2). Position 225 is a phosphotyrosine; by SRC (Y225). The tandem RWD domains stretch occupies residues L247 to R683. The disordered stretch occupies residues F301–K336. The segment covering D306–E319 has biased composition (acidic residues). 3 positions are modified to phosphoserine: S307, S312, and S314. T328 carries the post-translational modification Phosphothreonine.

It belongs to the THOC5 family. In terms of assembly, component of the THO subcomplex, which is composed of THOC1, THOC2, THOC3, THOC5, THOC6 and THOC7. The THO subcomplex interacts with DDX39B to form the THO-DDX39B complex which multimerizes into a 28-subunit tetrameric assembly. Component of the transcription/export (TREX) complex at least composed of ALYREF/THOC4, DDX39B, SARNP/CIP29, CHTOP and the THO subcomplex; in the complex interacts with THOC1, THOC2, THOC5, THOC6 and THOC7; forms a coiled-coil dimer with THOC7; together with THOC6 and THOC7, plays a key structural role in oligomerization of the THO-DDX39B complex. TREX seems to have a dynamic structure involving ATP-dependent remodeling. Interacts with phosphorylated CSF1R. Interacts (via N-terminus) with the NTF2 domain of NXF1. Forms a complex with CEBPB. Interacts with CPSF6; indicative for an association with the cleavage factor Im (CFIm) complex. Interacts with LUZP4. Interacts with NCBP3. Post-translationally, phosphorylated on tyrosine upon binding to activated CSF1R; which causes a dissociation of the two proteins. Phosphorylation on Ser-5 and/or Ser-6 is required for nuclear export. Phosphorylated on Thr-328 in insulin-stimulated adipocytes. Phosphorylation at Tyr-225 modulates mRNA binding. In terms of tissue distribution, ubiquitously expressed.

The protein resides in the nucleus. It localises to the cytoplasm. Component of the THO subcomplex of the TREX complex which is thought to couple mRNA transcription, processing and nuclear export, and which specifically associates with spliced mRNA and not with unspliced pre-mRNA. Plays a key structural role in the oligomerization of the THO-DDX39B complex. TREX is recruited to spliced mRNAs by a transcription-independent mechanism, binds to mRNA upstream of the exon-junction complex (EJC) and is recruited in a splicing- and cap-dependent manner to a region near the 5' end of the mRNA where it functions in mRNA export to the cytoplasm via the TAP/NXF1 pathway. THOC5 in conjunction with ALYREF/THOC4 functions in NXF1-NXT1 mediated nuclear export of HSP70 mRNA; both proteins enhance the RNA binding activity of NXF1 and are required for NXF1 localization to the nuclear rim. Involved in transcription elongation and genome stability. Involved in alternative polyadenylation site choice by recruiting CPSF6 to 5' region of target genes; probably mediates association of the TREX and CFIm complexes. Functionally, regulates the expression of myeloid transcription factors CEBPA, CEBPB and GAB2 by enhancing the levels of phosphatidylinositol 3,4,5-trisphosphate. May be involved in the differentiation of granulocytes and adipocytes. Essential for hematopoietic primitive cell survival and plays an integral role in monocytic development. In terms of biological role, (Microbial infection) The TREX complex is essential for the export of Kaposi's sarcoma-associated herpesvirus (KSHV) intronless mRNAs and infectious virus production. This is THO complex subunit 5 (THOC5) from Homo sapiens (Human).